The following is a 390-amino-acid chain: NADH-quinone oxidoreductase subunit D (390 aa).

The protein belongs to the complex I 49 kDa subunit family. As to quaternary structure, NDH-1 is composed of 14 different subunits. Subunits NuoB, C, D, E, F, and G constitute the peripheral sector of the complex.

It localises to the cell inner membrane. It carries out the reaction a quinone + NADH + 5 H(+)(in) = a quinol + NAD(+) + 4 H(+)(out). Functionally, NDH-1 shuttles electrons from NADH, via FMN and iron-sulfur (Fe-S) centers, to quinones in the respiratory chain. The immediate electron acceptor for the enzyme in this species is believed to be ubiquinone. Couples the redox reaction to proton translocation (for every two electrons transferred, four hydrogen ions are translocated across the cytoplasmic membrane), and thus conserves the redox energy in a proton gradient. The sequence is that of NADH-quinone oxidoreductase subunit D from Geobacter metallireducens (strain ATCC 53774 / DSM 7210 / GS-15).